We begin with the raw amino-acid sequence, 326 residues long: MAEAISAALPTRDQVVPSRKRVKLPPWLEVAKPRLIPLLLATTLGGMALTEGWPLSSPRLVCTLGGGALASAAAGVLNCLWEQDLDGRMARTSGRALPSGRLSPTSAFIGAIACTLAAAMLLVSGVNCLAAGLSLLGLCSYVLLYTALLKPRTTQNIVIGGVAGAIPPLVGAAAATGHVGLGGWWLFALVMVWTPAHFWALALLLREDYRAVGIPMLPVVKGPVVTARAIRRYGWATVLLSGFGVLALPTGGVFYGLILLPFNGRLIQMVQRLSMDPDSLMAAKGLFRWSILYLFGICLLLILSRTDLASSFDQQVMFVLQQLPIV.

8 helical membrane-spanning segments follow: residues 35–55 (LIPL…GWPL), 60–80 (LVCT…LNCL), 106–126 (SAFI…VSGV), 129–149 (LAAG…TALL), 157–177 (IVIG…AATG), 185–205 (WLFA…ALLL), 242–262 (GFGV…LLPF), and 283–303 (AKGL…LLIL).

It belongs to the UbiA prenyltransferase family. Protoheme IX farnesyltransferase subfamily.

It localises to the cell inner membrane. The catalysed reaction is heme b + (2E,6E)-farnesyl diphosphate + H2O = Fe(II)-heme o + diphosphate. Its pathway is porphyrin-containing compound metabolism; heme O biosynthesis; heme O from protoheme: step 1/1. Its function is as follows. Converts heme B (protoheme IX) to heme O by substitution of the vinyl group on carbon 2 of heme B porphyrin ring with a hydroxyethyl farnesyl side group. This chain is Protoheme IX farnesyltransferase, found in Parasynechococcus marenigrum (strain WH8102).